Reading from the N-terminus, the 143-residue chain is Transmembrane protein 80 (143 aa).

A run of 4 helical transmembrane segments spans residues 22 to 42 (LLCLSGTYYALYFLATLLLLV), 47 to 67 (VFTYPHSCLVLDLTLLFLMGI), 88 to 108 (LAASLVLTVGSALLSAYFLLW), and 122 to 142 (PLLALHGLEAVLQVVAIAAFV).

The protein localises to the membrane. It is found in the cell projection. The protein resides in the cilium. This chain is Transmembrane protein 80 (TMEM80), found in Bos taurus (Bovine).